A 244-amino-acid polypeptide reads, in one-letter code: tRNA uridine(34) hydroxylase (244 aa).

The Rhodanese domain maps to 129-219 (QGRELVMLDT…GILKYFEETD (91 aa)). C183 serves as the catalytic Cysteine persulfide intermediate.

The protein belongs to the TrhO family.

It carries out the reaction uridine(34) in tRNA + AH2 + O2 = 5-hydroxyuridine(34) in tRNA + A + H2O. In terms of biological role, catalyzes oxygen-dependent 5-hydroxyuridine (ho5U) modification at position 34 in tRNAs. The polypeptide is tRNA uridine(34) hydroxylase (Bordetella bronchiseptica (strain ATCC BAA-588 / NCTC 13252 / RB50) (Alcaligenes bronchisepticus)).